Reading from the N-terminus, the 241-residue chain is Small ribosomal subunit protein uS2 (241 aa).

This sequence belongs to the universal ribosomal protein uS2 family.

In Klebsiella pneumoniae (strain 342), this protein is Small ribosomal subunit protein uS2.